The sequence spans 205 residues: Urease accessory protein UreE (205 aa).

A compositionally biased stretch (basic and acidic residues) spans 171–192 (HHGHSHSHDHDHDHDHDHDHQH). Residues 171–205 (HHGHSHSHDHDHDHDHDHDHQHGPCCSHGHHHGHR) are disordered.

It belongs to the UreE family.

It localises to the cytoplasm. Involved in urease metallocenter assembly. Binds nickel. Probably functions as a nickel donor during metallocenter assembly. This is Urease accessory protein UreE from Burkholderia pseudomallei (strain K96243).